Here is a 341-residue protein sequence, read N- to C-terminus: Chorismate synthase (341 aa).

Disordered regions lie at residues 45-64 and 109-134; these read LERR…GRQE and HADD…GRET. An NADP(+)-binding site is contributed by Arg48. Residues 128 to 130, Gly280, 295 to 299, and Arg308 each bind FMN; these read RSS and KPTSS.

Belongs to the chorismate synthase family. As to quaternary structure, homotetramer. FMNH2 serves as cofactor.

The enzyme catalyses 5-O-(1-carboxyvinyl)-3-phosphoshikimate = chorismate + phosphate. The protein operates within metabolic intermediate biosynthesis; chorismate biosynthesis; chorismate from D-erythrose 4-phosphate and phosphoenolpyruvate: step 7/7. Functionally, catalyzes the anti-1,4-elimination of the C-3 phosphate and the C-6 proR hydrogen from 5-enolpyruvylshikimate-3-phosphate (EPSP) to yield chorismate, which is the branch point compound that serves as the starting substrate for the three terminal pathways of aromatic amino acid biosynthesis. This reaction introduces a second double bond into the aromatic ring system. The sequence is that of Chorismate synthase from Bdellovibrio bacteriovorus (strain ATCC 15356 / DSM 50701 / NCIMB 9529 / HD100).